The chain runs to 470 residues: MSDGKKHVVIIGGGITGLAAAFYMEKEIKEKNLPLELTLVEASPRVGGKIQTVKKDGYIIERGPDSFLERKKSAPQLVKDLGLEHLLVNNATGQSYVLVNRTLHPMPKGAVMGIPTKIAPFVSTGLFSLSGKARAAMDFILPASKTKDDQSLGEFFRRRVGDEVVENLIEPLLSGIYAGDIDKLSLMSTFPQFYQTEQKHRSLILGMKKTRPQGSGQQLTAKKQGQFQTLSTGLQTLVEEIEKQLKLTKVYKGTKVTKLSHSGSCYSLELDNGVTLDADSVIVTAPHKAAAGMLSELPAISHLKNMHSTSVANVALGFPEGSVQMEHEGTGFVISRNSDFAITACTWTNKKWPHAAPEGKTLLRAYVGKAGDESIVDLSDNDIINIVLEDLKKVMNINGEPEMTCVTRWHESMPQYHVGHKQRIKELREALASAYPGVYMTGASFEGVGIPDCIDQGKAAVSDALTYLFS.

FAD contacts are provided by residues 12-17 (GGGITG), 41-42 (EA), lysine 49, 63-66 (GPDS), valine 256, tryptophan 409, and 448-450 (VGI).

This sequence belongs to the protoporphyrinogen/coproporphyrinogen oxidase family. Coproporphyrinogen III oxidase subfamily. In terms of assembly, monomer. The cofactor is FAD.

The protein resides in the cytoplasm. Its subcellular location is the cell membrane. It catalyses the reaction coproporphyrinogen III + 3 O2 = coproporphyrin III + 3 H2O2. It functions in the pathway porphyrin-containing compound metabolism; protoheme biosynthesis. With respect to regulation, only weakly inhibited by acifluorfen, in contrast to eukaryotic family members. Weakly inhibited by methylacifluorfen. Bilirubin, biliverdin and hemin are all competitive inhibitors. Its function is as follows. Involved in coproporphyrin-dependent heme b biosynthesis. Catalyzes the oxidation of coproporphyrinogen III to coproporphyrin III. Can also oxidize protoporphyrinogen IX to protoporphyrin-IX. The specific activity for the oxidation of coproporphyrinogen III is much higher than that for the oxidation of protoporphyrinogen IX. Can also oxidize mesoporphyrinogen IX, but not uroporphyrinogen III. The sequence is that of Coproporphyrinogen III oxidase from Bacillus subtilis (strain 168).